The chain runs to 237 residues: DCN1-like protein 5 (237 aa).

Ser41 bears the Phosphoserine mark. In terms of domain architecture, DCUN1 spans 46 to 232 (FSRKKCLAWF…LLDEFVEWQK (187 aa)).

As to quaternary structure, part of a complex that contains DCUN1D5, CUL1 and RBX1; this interaction is bridged by CUL1. Interacts (via the DCUN1 domain) with the unneddylated cullins: interacts with CUL1, CUL2, CUL3, CUL4A, CUL4B and CUL5; these interactions promote the cullin neddylation and the identity of the cullin dictates the affinity of the interaction. Interacts (via DCUN1 domain) with UBE2M (N-terminally acetylated form) and probably with UBE2F (N-terminally acetylated form). May also interact with regulators or subunits of cullin-RING ligases such as RBX1, RNF7, ELOB and DDB1; these interactions are bridged by cullins. Interacts with CAND1; this interaction is bridged by cullins and strongly inhibits the neddylation of cullins. These CAND-cullin-DCNL complexes can only be neddylated in the presence of a substrate adapter. Phosphorylation at Ser-41 is independent of cullin's interaction. Phosphorylated in response to both TICAM1 and MYD88 dependent Toll-like receptor (TLR) pathway activation. Phosphorylated in response to IL1B stimulation.

Its subcellular location is the nucleus. The protein resides in the cytoplasm. The protein localises to the cytoskeleton. It localises to the spindle. Its function is as follows. Contributes to the neddylation of all cullins by transferring NEDD8 from N-terminally acetylated NEDD8-conjugating E2s enzyme to different cullin C-terminal domain-RBX complexes which is necessary for the activation of cullin-RING E3 ubiquitin ligases (CRLs). May play a role in DNA damage response and may participate in cell proliferation and anchorage-independent cell growth. The polypeptide is DCN1-like protein 5 (Rattus norvegicus (Rat)).